A 103-amino-acid polypeptide reads, in one-letter code: N(4)-acetylcytidine amidohydrolase (103 aa).

The ASCH domain occupies 6-94; that stretch reads ITFFQRFQND…IAEIYPNQTQ (89 aa). Lys-21 functions as the Proton acceptor in the catalytic mechanism. Thr-24 serves as the catalytic Nucleophile. Glu-74 (proton donor) is an active-site residue.

This sequence belongs to the N(4)-acetylcytidine amidohydrolase family.

The enzyme catalyses N(4)-acetylcytidine + H2O = cytidine + acetate + H(+). It carries out the reaction N(4)-acetyl-2'-deoxycytidine + H2O = 2'-deoxycytidine + acetate + H(+). The catalysed reaction is N(4)-acetylcytosine + H2O = cytosine + acetate + H(+). In terms of biological role, catalyzes the hydrolysis of N(4)-acetylcytidine (ac4C). This chain is N(4)-acetylcytidine amidohydrolase (yqfB), found in Salmonella typhi.